A 1357-amino-acid chain; its full sequence is DNA-directed RNA polymerase subunit beta (1357 aa).

It belongs to the RNA polymerase beta chain family. In terms of assembly, the RNAP catalytic core consists of 2 alpha, 1 beta, 1 beta' and 1 omega subunit. When a sigma factor is associated with the core the holoenzyme is formed, which can initiate transcription.

The catalysed reaction is RNA(n) + a ribonucleoside 5'-triphosphate = RNA(n+1) + diphosphate. Its function is as follows. DNA-dependent RNA polymerase catalyzes the transcription of DNA into RNA using the four ribonucleoside triphosphates as substrates. The protein is DNA-directed RNA polymerase subunit beta of Hahella chejuensis (strain KCTC 2396).